A 654-amino-acid polypeptide reads, in one-letter code: MDELLGEALSAENQTGESTVESEKLVTPEDVMTISSLEQRTLNPDLFLYKELVKAHLGERAASVIGMLVALGRLSVRELVEKIDGMDVDSVKTTLVSLTQLRCVKYLQETAISGKKTTYYYYNEEGIHILLYSGLIIDEIITQMRVNDEEEHKQLVAEIVQNVISLGSLTVEDYLSSVTSDSMKYTISSLFVQLCEMGYLIQISKLHYTPIEDLWQFLYEKHYKNIPRNSPLSDLKKRSQAKMNAKTDFAKIINKPNELSQILTVDPKTSLRIVKPTVSLTINLDRFMKGRRSKQLINLAKTRVGSVTAQVYKIALRLTEQKSPKIRDPLTQTGLLQDLEEAKSFQDEAELVEEKTPGLTFNAIDLARHLPAELDLRGSLLSRKPSDNKKRSGSNAAASLPSKKLKTEDGFVIPALPAAVSKSLQESGDTQEEDEEEEDLDADTEDPHSASLINSHLKILASSNFPFLNETKPGVYYVPYSKLMPVLKSSVYEYVIASTLGPSAMRLSRCIRDNKLVSEKIINSTALMKEKDIRSTLASLIRYNSVEIQEVPRTADRSASRAVFLFRCKETHSYNFMRQNLEWNMANLLFKKEKLKQENSTLLKKANRDDVKGRENELLLPSELNQLKMVNERELNVFARLSRLLSLWEVFQMA.

Position 27 is a phosphothreonine (Thr27). 2 disordered regions span residues 381–401 (LSRK…ASLP) and 422–448 (KSLQ…EDPH). A phosphoserine mark is found at Ser392 and Ser394. Over residues 429-444 (DTQEEDEEEEDLDADT) the composition is skewed to acidic residues. The interval 581–602 (LEWNMANLLFKKEKLKQENSTL) is leucine-zipper.

Belongs to the eukaryotic RPC3/POLR3C RNA polymerase subunit family. In terms of assembly, component of the RNA polymerase III (Pol III) complex consisting of 17 subunits.

It localises to the cytoplasm. The protein localises to the nucleus. In terms of biological role, DNA-dependent RNA polymerase catalyzes the transcription of DNA into RNA using the four ribonucleoside triphosphates as substrates. Specific core component of RNA polymerase III which synthesizes small RNAs, such as 5S rRNA and tRNAs. This Saccharomyces cerevisiae (strain ATCC 204508 / S288c) (Baker's yeast) protein is DNA-directed RNA polymerase III subunit RPC3 (RPC82).